Consider the following 1483-residue polypeptide: Heme-responsive zinc finger transcription factor HAP1 (1483 aa).

Over residues 1–50 (MSNTPYNSSVPSIASMTQSSVSRSPNMHTATTPGANTSSNSPPLHMSSDS) the composition is skewed to polar residues. The tract at residues 1–56 (MSNTPYNSSVPSIASMTQSSVSRSPNMHTATTPGANTSSNSPPLHMSSDSSKIKRK) is disordered. Cys-64, Cys-67, Cys-74, Cys-81, Cys-84, and Cys-93 together coordinate Zn(2+). Positions 64–93 (CTICRKRKVKCDKLRPHCQQCTKTGVAHLC) form a DNA-binding region, zn(2)-C6 fungal-type. Positions 105 to 134 (EKELLKDNELKKLRERVKSLEKTLSKVHSS) form a coiled coil. A compositionally biased stretch (polar residues) spans 162 to 176 (VNANTGSASSASHMH). A disordered region spans residues 162-208 (VNANTGSASSASHMHQQQQQQQQQEQQQDFSRSANANANSSSLSISN). Positions 177–208 (QQQQQQQQQEQQQDFSRSANANANSSSLSISN) are enriched in low complexity. Positions 244–444 (KGDPYLKLLW…NTIPHHQPQS (201 aa)) are heme-responsive; required for HMC formation. 6 HRM repeats span residues 280 to 285 (KCPINH), 299 to 304 (KCPVDH), 323 to 328 (KCPVDH), 347 to 352 (RCPVDH), 389 to 394 (KCPVDH), and 415 to 420 (RCPIDH). Composition is skewed to polar residues over residues 432-447 (STHNTIPHHQPQSGSH) and 706-734 (QLNATIPATSQDVSNNGSKKANPSTNPTL). Disordered regions lie at residues 432–458 (STHNTIPHHQPQSGSHARSHPAQNRKH) and 706–767 (QLNA…KENQ). The segment covering 735-759 (NNNMSAATTNSSSRSGSADSRSGSN) has biased composition (low complexity). The HRM 7 repeat unit spans residues 1192-1197 (KCPVYQ). 2 disordered regions span residues 1266–1289 (DGYIDNNSNNDIPRGISPKPSNGL) and 1386–1411 (NTDTSANGSALSTLTSPQGSDLASNS). Residues 1388–1411 (DTSANGSALSTLTSPQGSDLASNS) are compositionally biased toward polar residues.

Binds DNA as a homodimer. Interacts with SRO9 and YDJ1. In the absence of heme, binds to at least four cellular proteins, including YDJ1 and SRO9, forming a high-molecular-weight complex (HMC) which results in repression of its activity and dictates its DNA-binding specificity.

The protein resides in the nucleus. In terms of biological role, regulation of oxygen dependent gene expression. It modulates the expression of Iso-1 (CYP1) and Iso-2 (CYP3) cytochrome c. In response to heme, promotes transcription of genes encoding functions required for respiration, controlling oxidative damage and repression of anaerobic genes. Binds to the sequence 5'-CGGNNNTNNCGG-3'. The polypeptide is Heme-responsive zinc finger transcription factor HAP1 (HAP1) (Saccharomyces cerevisiae (strain JAY291) (Baker's yeast)).